A 393-amino-acid chain; its full sequence is Protein phosphatase 2C homolog 4 (393 aa).

The PPM-type phosphatase domain maps to 33–368 (YNCVGSMQGY…DNMTAIIVVL (336 aa)). The Mn(2+) site is built by aspartate 83, glycine 84, aspartate 310, and aspartate 359.

Belongs to the PP2C family. Mg(2+) serves as cofactor. The cofactor is Mn(2+).

The catalysed reaction is O-phospho-L-seryl-[protein] + H2O = L-seryl-[protein] + phosphate. It catalyses the reaction O-phospho-L-threonyl-[protein] + H2O = L-threonyl-[protein] + phosphate. The protein is Protein phosphatase 2C homolog 4 (PTC4) of Saccharomyces cerevisiae (strain ATCC 204508 / S288c) (Baker's yeast).